The primary structure comprises 363 residues: Peroxin-36 (363 aa).

Residues 1–193 (MSNLEKQIRL…ESFFINSFEQ (193 aa)) lie on the Cytoplasmic side of the membrane. Disordered regions lie at residues 71–114 (QNHQ…DTST) and 128–157 (TNSN…SKSG). Over residues 97-114 (VDSNSDSSSSETLIDTST) the composition is skewed to low complexity. The chain crosses the membrane as a helical span at residues 194-213 (LIALFDNFYFLSSLIGFNTS). Residues 214–232 (NSNSKITRLLRNFIKQASK) are Peroxisomal-facing. A helical membrane pass occupies residues 233-250 (IWLVIIFLTVKNLFIRMI). The Cytoplasmic segment spans residues 251–363 (KLNRTEKKVK…SSDDIIDEYA (113 aa)).

The protein resides in the peroxisome membrane. Its function is as follows. Controls peroxisome morphology and abundance under conditions of peroxisome proliferation such as oleate and methanol media. Has additional function(s), which is not present in its functional homologs such as Saccharomyces cerevisea PEX34 or human PEX16. This is Peroxin-36 from Komagataella phaffii (strain GS115 / ATCC 20864) (Yeast).